Here is a 159-residue protein sequence, read N- to C-terminus: SsrA-binding protein (159 aa).

Positions 133 to 147 (KRQDLAKRDAQREMA) are enriched in basic and acidic residues. A disordered region spans residues 133-159 (KRQDLAKRDAQREMARAAGRRSKGMDD). The span at 150–159 (AGRRSKGMDD) shows a compositional bias: basic residues.

Belongs to the SmpB family.

The protein resides in the cytoplasm. Functionally, required for rescue of stalled ribosomes mediated by trans-translation. Binds to transfer-messenger RNA (tmRNA), required for stable association of tmRNA with ribosomes. tmRNA and SmpB together mimic tRNA shape, replacing the anticodon stem-loop with SmpB. tmRNA is encoded by the ssrA gene; the 2 termini fold to resemble tRNA(Ala) and it encodes a 'tag peptide', a short internal open reading frame. During trans-translation Ala-aminoacylated tmRNA acts like a tRNA, entering the A-site of stalled ribosomes, displacing the stalled mRNA. The ribosome then switches to translate the ORF on the tmRNA; the nascent peptide is terminated with the 'tag peptide' encoded by the tmRNA and targeted for degradation. The ribosome is freed to recommence translation, which seems to be the essential function of trans-translation. The protein is SsrA-binding protein of Salinispora arenicola (strain CNS-205).